The following is a 314-amino-acid chain: Acetaldehyde dehydrogenase 2 (314 aa).

11–14 contacts NAD(+); the sequence is SGNI. The active-site Acyl-thioester intermediate is the cysteine 129. Residues 160–168 and asparagine 291 each bind NAD(+); that span reads SAGPGTRAN.

Belongs to the acetaldehyde dehydrogenase family.

The catalysed reaction is acetaldehyde + NAD(+) + CoA = acetyl-CoA + NADH + H(+). This is Acetaldehyde dehydrogenase 2 from Rhodococcus erythropolis (strain PR4 / NBRC 100887).